A 334-amino-acid chain; its full sequence is Cysteine and histidine-rich domain-containing protein 1 (334 aa).

The Zn(2+) site is built by C5, C10, C24, H27, C42, C43, C59, H64, C156, C161, C175, H178, C193, C194, C210, and H215. CHORD domains lie at 5-64 (CYNR…KGQH) and 156-215 (CKNG…KGTH). The CS domain maps to 226 to 315 (VVPCRHDWHQ…AEFMTWARLE (90 aa)).

Regulates centrosome duplication. This Xenopus laevis (African clawed frog) protein is Cysteine and histidine-rich domain-containing protein 1 (chordc1).